The following is a 524-amino-acid chain: Cytochrome P450 52A6 (524 aa).

The chain crosses the membrane as a helical span at residues 17–34 (WYTVITLAALVFLISSNI). C472 contributes to the heme binding site.

The protein belongs to the cytochrome P450 family. The cofactor is heme.

The protein localises to the membrane. Its function is as follows. Together with an NADPH cytochrome P450 the enzyme system catalyzes the terminal hydroxylation as the first step in the assimilation of alkanes and fatty acids. Preferentially hydroxylates hexadecane. This is Cytochrome P450 52A6 (CYP52A6) from Candida tropicalis (Yeast).